The primary structure comprises 233 residues: Large ribosomal subunit protein uL3 (233 aa).

This sequence belongs to the universal ribosomal protein uL3 family. Part of the 50S ribosomal subunit. Forms a cluster with proteins L14 and L19.

One of the primary rRNA binding proteins, it binds directly near the 3'-end of the 23S rRNA, where it nucleates assembly of the 50S subunit. This chain is Large ribosomal subunit protein uL3, found in Ureaplasma parvum serovar 3 (strain ATCC 27815 / 27 / NCTC 11736).